We begin with the raw amino-acid sequence, 139 residues long: Large ribosomal subunit protein bL20 (139 aa).

The protein belongs to the bacterial ribosomal protein bL20 family.

Its function is as follows. Binds directly to 23S ribosomal RNA and is necessary for the in vitro assembly process of the 50S ribosomal subunit. It is not involved in the protein synthesizing functions of that subunit. This chain is Large ribosomal subunit protein bL20, found in Leuconostoc mesenteroides subsp. mesenteroides (strain ATCC 8293 / DSM 20343 / BCRC 11652 / CCM 1803 / JCM 6124 / NCDO 523 / NBRC 100496 / NCIMB 8023 / NCTC 12954 / NRRL B-1118 / 37Y).